Here is a 671-residue protein sequence, read N- to C-terminus: NADPH--cytochrome P450 reductase (671 aa).

Residues 1 to 14 (MSAEHVEEVVSEEP) lie on the Lumenal side of the membrane. The chain crosses the membrane as a helical span at residues 15-35 (FLGTLDIALLVVLLVGATWYF). The Cytoplasmic segment spans residues 36–671 (MRSRKKEEAP…QKRYSADVWS (636 aa)). The region spanning 77–221 (LVVFYGSQTG…DFITWKDRFW (145 aa)) is the Flavodoxin-like domain. Residues 83 to 88 (SQTGTA), 135 to 138 (ATYG), 170 to 179 (LGNKTYEHYN), and Asp-205 contribute to the FMN site. Residues 276 to 515 (KNPFLASVIV…FIRKSQFRLP (240 aa)) form the FAD-binding FR-type domain. NADP(+) is bound at residue Arg-295. FAD-binding positions include 451-454 (RYYS), 469-471 (TAV), Tyr-475, and 485-488 (GVAT). Residues Thr-529, 589 to 590 (SR), 595 to 599 (KIYVT), and Asp-632 each bind NADP(+). An FAD-binding site is contributed by Trp-670.

The protein belongs to the NADPH--cytochrome P450 reductase family. It in the N-terminal section; belongs to the flavodoxin family. This sequence in the C-terminal section; belongs to the flavoprotein pyridine nucleotide cytochrome reductase family. FAD serves as cofactor. Requires FMN as cofactor.

It localises to the endoplasmic reticulum membrane. The catalysed reaction is 2 oxidized [cytochrome P450] + NADPH = 2 reduced [cytochrome P450] + NADP(+) + H(+). Functionally, this enzyme is required for electron transfer from NADP to cytochrome P450 in microsomes. It can also provide electron transfer to heme oxygenase and cytochrome B5. The chain is NADPH--cytochrome P450 reductase from Musca domestica (House fly).